We begin with the raw amino-acid sequence, 249 residues long: Acetylglutamate kinase (249 aa).

Substrate contacts are provided by residues 38–39, Arg60, and Asn147; that span reads GG.

It belongs to the acetylglutamate kinase family. ArgB subfamily.

It is found in the cytoplasm. It catalyses the reaction N-acetyl-L-glutamate + ATP = N-acetyl-L-glutamyl 5-phosphate + ADP. It participates in amino-acid biosynthesis; L-arginine biosynthesis; N(2)-acetyl-L-ornithine from L-glutamate: step 2/4. In terms of biological role, catalyzes the ATP-dependent phosphorylation of N-acetyl-L-glutamate. This is Acetylglutamate kinase from Deinococcus radiodurans (strain ATCC 13939 / DSM 20539 / JCM 16871 / CCUG 27074 / LMG 4051 / NBRC 15346 / NCIMB 9279 / VKM B-1422 / R1).